Reading from the N-terminus, the 428-residue chain is MNRKITVPEAMLPRGVKDFLPNKAAKLEYLKQSLKDVFHRWAFRPIMPPTLEYLDVLERGLGAGLRDKTFRFDDRQNGKLVAFCPDITPQVARIVATRMKGAPLPQRLCYNGKVLRHTEQQAGKDREIIQSGVELIGLQGPEADAEMIAMAIECLQSLGATEFTVDIGQVEFFHGVMDGLNLPAPQALAVQQAIARKDASGLSELLSELSLDDRKYAEVMALPRLFGGREVLDRAADIVVNDRSRRALENLRQILAVLEAYGVEEHVTFDLGELRGLGYHTGVTFQGFLSGMGTAVCSGGRYDTLTARYGMDAPATGFAFNLLNLLMALDRTLESAAVQPFDVMILQSGPDKRAAQSLARALRDQGYACARDIIERSLQDSLDYGRKMHFRHVMVVADQAGDVRLIRLADGSEQTISLQAVLAGEFRL.

The protein belongs to the class-II aminoacyl-tRNA synthetase family. HisZ subfamily. As to quaternary structure, heteromultimer composed of HisG and HisZ subunits.

The protein resides in the cytoplasm. It functions in the pathway amino-acid biosynthesis; L-histidine biosynthesis; L-histidine from 5-phospho-alpha-D-ribose 1-diphosphate: step 1/9. In terms of biological role, required for the first step of histidine biosynthesis. May allow the feedback regulation of ATP phosphoribosyltransferase activity by histidine. This chain is ATP phosphoribosyltransferase regulatory subunit, found in Syntrophotalea carbinolica (strain DSM 2380 / NBRC 103641 / GraBd1) (Pelobacter carbinolicus).